Here is a 228-residue protein sequence, read N- to C-terminus: Carboxy-S-adenosyl-L-methionine synthase (228 aa).

S-adenosyl-L-methionine-binding positions include Y30, 55-57 (GSS), 79-80 (DN), and 103-104 (DV).

The protein belongs to the class I-like SAM-binding methyltransferase superfamily. Cx-SAM synthase family.

It catalyses the reaction prephenate + S-adenosyl-L-methionine = carboxy-S-adenosyl-L-methionine + 3-phenylpyruvate + H2O. Functionally, catalyzes the conversion of S-adenosyl-L-methionine (SAM) to carboxy-S-adenosyl-L-methionine (Cx-SAM). This chain is Carboxy-S-adenosyl-L-methionine synthase, found in Staphylococcus epidermidis (strain ATCC 35984 / DSM 28319 / BCRC 17069 / CCUG 31568 / BM 3577 / RP62A).